The sequence spans 325 residues: Peroxidase RIP1 (325 aa).

The first 21 residues, 1–21 (MASSSPCQIFLVFVMVTLVTS), serve as a signal peptide directing secretion. Disulfide bonds link cysteine 38–cysteine 118, cysteine 71–cysteine 76, cysteine 125–cysteine 321, and cysteine 206–cysteine 231. Residue histidine 69 is the Proton acceptor of the active site. Residues aspartate 70, valine 73, glycine 75, aspartate 77, and serine 79 each coordinate Ca(2+). Asparagine 87 carries N-linked (GlcNAc...) asparagine glycosylation. Proline 169 is a substrate binding site. Asparagine 174 is a glycosylation site (N-linked (GlcNAc...) asparagine). Histidine 199 contacts heme b. Threonine 200 contacts Ca(2+). Asparagine 215 is a glycosylation site (N-linked (GlcNAc...) asparagine). Positions 244, 246, and 251 each coordinate Ca(2+).

The protein belongs to the peroxidase family. Classical plant (class III) peroxidase subfamily. Requires heme b as cofactor. The cofactor is Ca(2+). As to expression, expressed in the differentiating root epidermis following inoculation with the bacterial symbiont Sinorhizobium meliloti.

The protein localises to the secreted. The enzyme catalyses 2 a phenolic donor + H2O2 = 2 a phenolic radical donor + 2 H2O. In terms of biological role, removal of H(2)O(2), oxidation of toxic reductants, biosynthesis and degradation of lignin, suberization, auxin catabolism, response to environmental stresses such as wounding, pathogen attack and oxidative stress. These functions might be dependent on each isozyme/isoform in each plant tissue. The sequence is that of Peroxidase RIP1 from Medicago truncatula (Barrel medic).